We begin with the raw amino-acid sequence, 227 residues long: Urease accessory protein UreE (227 aa).

The disordered stretch occupies residues 192–227 (PHGSGLHVHAIHSHGHSHSHDHDHDHNHDHDHKHKQ). The segment covering 209 to 221 (HSHDHDHDHNHDH) has biased composition (basic and acidic residues).

Belongs to the UreE family.

The protein resides in the cytoplasm. In terms of biological role, involved in urease metallocenter assembly. Binds nickel. Probably functions as a nickel donor during metallocenter assembly. This Yersinia bercovieri protein is Urease accessory protein UreE.